Reading from the N-terminus, the 686-residue chain is DNA ligase (686 aa).

Residues 31-35 (DSEYD), 80-81 (SL), and Glu109 contribute to the NAD(+) site. Lys111 serves as the catalytic N6-AMP-lysine intermediate. Arg132, Glu166, Lys280, and Lys304 together coordinate NAD(+). Zn(2+) is bound by residues Cys430, Cys433, Cys448, and Cys453. The region spanning 611–686 (NVEGILSGKT…IWSEQDLLDL (76 aa)) is the BRCT domain.

Belongs to the NAD-dependent DNA ligase family. LigA subfamily. It depends on Mg(2+) as a cofactor. Mn(2+) is required as a cofactor.

It carries out the reaction NAD(+) + (deoxyribonucleotide)n-3'-hydroxyl + 5'-phospho-(deoxyribonucleotide)m = (deoxyribonucleotide)n+m + AMP + beta-nicotinamide D-nucleotide.. DNA ligase that catalyzes the formation of phosphodiester linkages between 5'-phosphoryl and 3'-hydroxyl groups in double-stranded DNA using NAD as a coenzyme and as the energy source for the reaction. It is essential for DNA replication and repair of damaged DNA. The sequence is that of DNA ligase from Lactococcus lactis subsp. cremoris (strain SK11).